A 1051-amino-acid chain; its full sequence is Carbamoyl phosphate synthase large chain (1051 aa).

The interval 1–399 is carboxyphosphate synthetic domain; sequence MKETPKKVLV…SLQKAVRMLD (399 aa). The ATP site is built by Arg-127, Arg-167, Gly-173, Gly-174, Lys-206, Leu-208, Glu-213, Gly-239, Val-240, His-241, Gln-282, and Glu-296. The ATP-grasp 1 domain occupies 131–325; it reads RETMIENNLP…LAYVSAKLAL (195 aa). Mg(2+) contacts are provided by Gln-282, Glu-296, and Asn-298. Gln-282, Glu-296, and Asn-298 together coordinate Mn(2+). Positions 400–548 are oligomerization domain; that stretch reads IGEPGVVGGK…LTYNGTEDDL (149 aa). The tract at residues 549 to 930 is carbamoyl phosphate synthetic domain; it reads EFSQGNKLLI…LKSWLSSIPN (382 aa). The 191-residue stretch at 673-863 folds into the ATP-grasp 2 domain; sequence SKLLDKLGIS…LINEAMKAIF (191 aa). Residues Arg-709, Lys-748, Ile-750, Glu-755, Gly-779, Val-780, His-781, Ser-782, Gln-822, and Glu-834 each coordinate ATP. Gln-822, Glu-834, and Asn-836 together coordinate Mg(2+). Positions 822, 834, and 836 each coordinate Mn(2+). One can recognise an MGS-like domain in the interval 930 to 1051; the sequence is NRIPNKNGIA…FEISEYGGGI (122 aa). The tract at residues 931–1051 is allosteric domain; that stretch reads RIPNKNGIAL…FEISEYGGGI (121 aa).

Belongs to the CarB family. Composed of two chains; the small (or glutamine) chain promotes the hydrolysis of glutamine to ammonia, which is used by the large (or ammonia) chain to synthesize carbamoyl phosphate. Tetramer of heterodimers (alpha,beta)4. Mg(2+) is required as a cofactor. It depends on Mn(2+) as a cofactor.

The catalysed reaction is hydrogencarbonate + L-glutamine + 2 ATP + H2O = carbamoyl phosphate + L-glutamate + 2 ADP + phosphate + 2 H(+). The enzyme catalyses hydrogencarbonate + NH4(+) + 2 ATP = carbamoyl phosphate + 2 ADP + phosphate + 2 H(+). Its pathway is amino-acid biosynthesis; L-arginine biosynthesis; carbamoyl phosphate from bicarbonate: step 1/1. It functions in the pathway pyrimidine metabolism; UMP biosynthesis via de novo pathway; (S)-dihydroorotate from bicarbonate: step 1/3. In terms of biological role, large subunit of the glutamine-dependent carbamoyl phosphate synthetase (CPSase). CPSase catalyzes the formation of carbamoyl phosphate from the ammonia moiety of glutamine, carbonate, and phosphate donated by ATP, constituting the first step of 2 biosynthetic pathways, one leading to arginine and/or urea and the other to pyrimidine nucleotides. The large subunit (synthetase) binds the substrates ammonia (free or transferred from glutamine from the small subunit), hydrogencarbonate and ATP and carries out an ATP-coupled ligase reaction, activating hydrogencarbonate by forming carboxy phosphate which reacts with ammonia to form carbamoyl phosphate. The polypeptide is Carbamoyl phosphate synthase large chain (Saccharolobus islandicus (strain L.S.2.15 / Lassen #1) (Sulfolobus islandicus)).